The following is a 250-amino-acid chain: Uracil-DNA glycosylase (250 aa).

Catalysis depends on Asp-78, which acts as the Proton acceptor. Residues 228-250 form a disordered region; sequence RGQKPVDWSGEQNNASRQGEFAL.

The protein belongs to the uracil-DNA glycosylase (UDG) superfamily. UNG family.

The protein localises to the cytoplasm. It carries out the reaction Hydrolyzes single-stranded DNA or mismatched double-stranded DNA and polynucleotides, releasing free uracil.. Its function is as follows. Excises uracil residues from the DNA which can arise as a result of misincorporation of dUMP residues by DNA polymerase or due to deamination of cytosine. The sequence is that of Uracil-DNA glycosylase from Bordetella pertussis (strain Tohama I / ATCC BAA-589 / NCTC 13251).